Reading from the N-terminus, the 473-residue chain is PPE family protein PPE37 (473 aa).

The Iron-binding motif signature appears at 203–206 (DFLE). The next 2 membrane-spanning stretches (helical) occupy residues 227-247 (VLDW…AYLV) and 250-270 (PLIY…PAGL).

The protein belongs to the mycobacterial PPE family.

The protein localises to the cell membrane. Functionally, essential for efficient heme-iron acquisition (HIA). Binds iron. Strains with a functional PPE37 can utilize low concentrations of hemin very efficiently in broth and on agar plates. During infection, might interfere with the pro-inflammatory cytokine response in infected macrophages. In vitro, incubation of the protein in the presence of M.tuberculosis proteases leads to the cleavage of PPE37 into two segments, the N- and C-terminal segments. Transfection of human monocytic THP-1 cell lines with the N-terminal segment leads to the proliferation and differentiation of THP-1 cells into adherent stellate cells with dendritic cell-like morphology. Transfection of THP-1 cells with the C-terminal segment leads to the apoptosis of the cells. Recombinant protein antigens display strong B-cell response in tuberculosis patients and immunized mice. This Mycobacterium tuberculosis (strain ATCC 25618 / H37Rv) protein is PPE family protein PPE37.